We begin with the raw amino-acid sequence, 151 residues long: 3-hydroxyacyl-[acyl-carrier-protein] dehydratase FabZ (151 aa).

Histidine 54 is a catalytic residue.

Belongs to the thioester dehydratase family. FabZ subfamily.

It is found in the cytoplasm. It catalyses the reaction a (3R)-hydroxyacyl-[ACP] = a (2E)-enoyl-[ACP] + H2O. In terms of biological role, involved in unsaturated fatty acids biosynthesis. Catalyzes the dehydration of short chain beta-hydroxyacyl-ACPs and long chain saturated and unsaturated beta-hydroxyacyl-ACPs. This Salmonella agona (strain SL483) protein is 3-hydroxyacyl-[acyl-carrier-protein] dehydratase FabZ.